We begin with the raw amino-acid sequence, 237 residues long: Concanavalin-Br (237 aa).

Positions 8 and 10 each coordinate Mn(2+). Ca(2+) contacts are provided by D10, Y12, N14, and D19. Y12 contacts a carbohydrate. D19, H24, and S34 together coordinate Mn(2+). 99-100 lines the a carbohydrate pocket; the sequence is LY. D208 serves as a coordination point for Ca(2+). Residue R228 coordinates a carbohydrate.

It belongs to the leguminous lectin family. Homotetramer.

Glucose/D-mannose specific lectin. Has anti-inflammatory activity in rats. Induces histamine release in mast cells from hamster and rat. Induces lymphocyte proliferation and IFNG production. Shows toxicity against the aquatic snail B.glabrata at concentrations higher than 20 ug/ml. This chain is Concanavalin-Br, found in Canavalia brasiliensis (Brazilian jack bean).